We begin with the raw amino-acid sequence, 93 residues long: Integration host factor subunit beta (93 aa).

The protein belongs to the bacterial histone-like protein family. In terms of assembly, heterodimer of an alpha and a beta chain.

In terms of biological role, this protein is one of the two subunits of integration host factor, a specific DNA-binding protein that functions in genetic recombination as well as in transcriptional and translational control. In Cereibacter sphaeroides (strain ATCC 17023 / DSM 158 / JCM 6121 / CCUG 31486 / LMG 2827 / NBRC 12203 / NCIMB 8253 / ATH 2.4.1.) (Rhodobacter sphaeroides), this protein is Integration host factor subunit beta (ihfB).